We begin with the raw amino-acid sequence, 58 residues long: Large ribosomal subunit protein uL30 (58 aa).

Belongs to the universal ribosomal protein uL30 family. In terms of assembly, part of the 50S ribosomal subunit.

This is Large ribosomal subunit protein uL30 from Desulfovibrio desulfuricans (strain ATCC 27774 / DSM 6949 / MB).